Consider the following 413-residue polypeptide: 2,3-diketo-5-methylthiopentyl-1-phosphate enolase (413 aa).

K98 (proton acceptor) is an active-site residue. Residues K147, K173 to E176, H264, G337, and G359 to G360 each bind substrate. K173, D175, and E176 together coordinate Mg(2+). K173 bears the N6-carboxylysine mark.

Belongs to the RuBisCO large chain family. Type IV subfamily. In terms of assembly, homodimer. Requires Mg(2+) as cofactor.

The catalysed reaction is 5-methylsulfanyl-2,3-dioxopentyl phosphate = 2-hydroxy-5-methylsulfanyl-3-oxopent-1-enyl phosphate. The protein operates within amino-acid biosynthesis; L-methionine biosynthesis via salvage pathway; L-methionine from S-methyl-5-thio-alpha-D-ribose 1-phosphate: step 3/6. Functionally, catalyzes the enolization of 2,3-diketo-5-methylthiopentyl-1-phosphate (DK-MTP-1-P) into 2-hydroxy-3-keto-5-methylthiopentenyl-1-phosphate (HK-MTPenyl-1-P). The sequence is that of 2,3-diketo-5-methylthiopentyl-1-phosphate enolase (mtnW) from Geobacillus kaustophilus (strain HTA426).